We begin with the raw amino-acid sequence, 247 residues long: Acidic 27 kDa endochitinase (247 aa).

A signal peptide spans 1 to 16 (MVLCCVFLLFLTGSFA). Residue Glu-84 is the Proton donor of the active site. Residues Cys-206 and Cys-238 are joined by a disulfide bond.

It belongs to the glycosyl hydrolase 19 family. Chitinase class II subfamily.

It localises to the secreted. It is found in the extracellular space. The catalysed reaction is Random endo-hydrolysis of N-acetyl-beta-D-glucosaminide (1-&gt;4)-beta-linkages in chitin and chitodextrins.. In terms of biological role, defense against chitin-containing fungal pathogens. In Solanum lycopersicum (Tomato), this protein is Acidic 27 kDa endochitinase (CHI17).